Reading from the N-terminus, the 443-residue chain is ATP-dependent protease ATPase subunit HslU (443 aa).

Residues isoleucine 18, 60-65, aspartate 256, glutamate 321, and arginine 393 each bind ATP; that span reads GVGKTE.

Belongs to the ClpX chaperone family. HslU subfamily. As to quaternary structure, a double ring-shaped homohexamer of HslV is capped on each side by a ring-shaped HslU homohexamer. The assembly of the HslU/HslV complex is dependent on binding of ATP.

The protein resides in the cytoplasm. Functionally, ATPase subunit of a proteasome-like degradation complex; this subunit has chaperone activity. The binding of ATP and its subsequent hydrolysis by HslU are essential for unfolding of protein substrates subsequently hydrolyzed by HslV. HslU recognizes the N-terminal part of its protein substrates and unfolds these before they are guided to HslV for hydrolysis. The polypeptide is ATP-dependent protease ATPase subunit HslU (Enterobacter sp. (strain 638)).